The sequence spans 209 residues: Nascent polypeptide-associated complex subunit alpha (209 aa).

The span at 1–21 (MSNPRVEELPDEEPKKTTVQE) shows a compositional bias: basic and acidic residues. Disordered stretches follow at residues 1-51 (MSNP…HNRN) and 121-175 (QLAS…DKDI). A compositionally biased stretch (acidic residues) spans 22–36 (HEDDSSDDSEVEEVG). Residues 49–114 (NRNEKKARKA…AKIEDVNAAA (66 aa)) form the NAC-A/B domain. Residues 127-150 (AEDHSGHNHGEPSKAVEADEKKED) are compositionally biased toward basic and acidic residues. Over residues 151-166 (KEDDEDEEEEEEEEVD) the composition is skewed to acidic residues. Positions 170–209 (LEDKDIELVMTQANVSRNKAVKALKENDNDIVNSIMALSI) constitute a UBA domain.

The protein belongs to the NAC-alpha family. Part of the nascent polypeptide-associated complex (NAC), consisting of EGD2 and EGD1. NAC associates with ribosomes via EGD1.

It localises to the cytoplasm. It is found in the nucleus. Its function is as follows. Component of the nascent polypeptide-associated complex (NAC), a dynamic component of the ribosomal exit tunnel, protecting the emerging polypeptides from interaction with other cytoplasmic proteins to ensure appropriate nascent protein targeting. The NAC complex also promotes mitochondrial protein import by enhancing productive ribosome interactions with the outer mitochondrial membrane and blocks the inappropriate interaction of ribosomes translating non-secretory nascent polypeptides with translocation sites in the membrane of the endoplasmic reticulum. EGD2 may also be involved in transcription regulation. The polypeptide is Nascent polypeptide-associated complex subunit alpha (EGD2) (Gibberella zeae (strain ATCC MYA-4620 / CBS 123657 / FGSC 9075 / NRRL 31084 / PH-1) (Wheat head blight fungus)).